A 178-amino-acid chain; its full sequence is Ribulose bisphosphate carboxylase small subunit, chloroplastic 2 (178 aa).

Residues 1–54 (MASISSTVATVSRAAPAQANMVAPFTGLKSNVAFPATKKANDFSTLPSNGGRVQ) constitute a chloroplast transit peptide.

The protein belongs to the RuBisCO small chain family. As to quaternary structure, heterohexadecamer of 8 large and 8 small subunits.

The protein resides in the plastid. It localises to the chloroplast. RuBisCO catalyzes two reactions: the carboxylation of D-ribulose 1,5-bisphosphate, the primary event in carbon dioxide fixation, as well as the oxidative fragmentation of the pentose substrate. Both reactions occur simultaneously and in competition at the same active site. Although the small subunit is not catalytic it is essential for maximal activity. The protein is Ribulose bisphosphate carboxylase small subunit, chloroplastic 2 of Flaveria pringlei.